The chain runs to 166 residues: MKELRIGRVINTHGIAGELKIDFNTDFPEQRFAKNSELLIAGEKLVVQSSRPFKQFWLVKFSDHENINLVEKYKGEDIFINERKEPRLSEGEFLVSQIIGLKVIDEKGNSIGEIADSFHTGANDVWTIKKSNGKEILIPYIDQVVKKVDLQTSTVTIELLEGLDED.

The PRC barrel domain occupies 90 to 163; sequence EGEFLVSQII…TVTIELLEGL (74 aa).

It belongs to the RimM family. In terms of assembly, binds ribosomal protein uS19.

The protein resides in the cytoplasm. An accessory protein needed during the final step in the assembly of 30S ribosomal subunit, possibly for assembly of the head region. Essential for efficient processing of 16S rRNA. May be needed both before and after RbfA during the maturation of 16S rRNA. It has affinity for free ribosomal 30S subunits but not for 70S ribosomes. In Oenococcus oeni (strain ATCC BAA-331 / PSU-1), this protein is Ribosome maturation factor RimM.